The following is a 444-amino-acid chain: Tryptophan 5-hydroxylase 1 (444 aa).

In terms of domain architecture, ACT spans 19–94 (TLIFSLKNEV…TVLSVDSPDQ (76 aa)). Residue Ser-58 is modified to Phosphoserine; by PKA. Residues Tyr-235, Arg-257, and Thr-265 each coordinate L-tryptophan. Residues His-272, His-277, and Glu-317 each coordinate Fe cation. Ser-336 and Ile-366 together coordinate L-tryptophan.

This sequence belongs to the biopterin-dependent aromatic amino acid hydroxylase family. As to quaternary structure, homotetramer. Interacts with DNAJC12. It depends on Fe(2+) as a cofactor. Post-translationally, ubiquitinated, leading to its degradation by the proteasome. Ubiquitinated is triggered by phosphorylation. Phosphorylated; triggering degradation by the proteasome.

The enzyme catalyses (6R)-L-erythro-5,6,7,8-tetrahydrobiopterin + L-tryptophan + O2 = 5-hydroxy-L-tryptophan + (4aS,6R)-4a-hydroxy-L-erythro-5,6,7,8-tetrahydrobiopterin. Its pathway is aromatic compound metabolism; serotonin biosynthesis; serotonin from L-tryptophan: step 1/2. Functionally, oxidizes L-tryptophan to 5-hydroxy-l-tryptophan in the rate-determining step of serotonin biosynthesis. This chain is Tryptophan 5-hydroxylase 1 (Tph1), found in Rattus norvegicus (Rat).